An 807-amino-acid polypeptide reads, in one-letter code: Glycerol-3-phosphate acyltransferase (807 aa).

Positions 309–314 match the HXXXXD motif motif; sequence CHRSHM.

This sequence belongs to the GPAT/DAPAT family.

The protein resides in the cell inner membrane. It catalyses the reaction sn-glycerol 3-phosphate + an acyl-CoA = a 1-acyl-sn-glycero-3-phosphate + CoA. It participates in phospholipid metabolism; CDP-diacylglycerol biosynthesis; CDP-diacylglycerol from sn-glycerol 3-phosphate: step 1/3. The chain is Glycerol-3-phosphate acyltransferase from Aeromonas hydrophila subsp. hydrophila (strain ATCC 7966 / DSM 30187 / BCRC 13018 / CCUG 14551 / JCM 1027 / KCTC 2358 / NCIMB 9240 / NCTC 8049).